The sequence spans 226 residues: 2-C-methyl-D-erythritol 4-phosphate cytidylyltransferase (226 aa).

This sequence belongs to the IspD/TarI cytidylyltransferase family. IspD subfamily.

It carries out the reaction 2-C-methyl-D-erythritol 4-phosphate + CTP + H(+) = 4-CDP-2-C-methyl-D-erythritol + diphosphate. It participates in isoprenoid biosynthesis; isopentenyl diphosphate biosynthesis via DXP pathway; isopentenyl diphosphate from 1-deoxy-D-xylulose 5-phosphate: step 2/6. Its function is as follows. Catalyzes the formation of 4-diphosphocytidyl-2-C-methyl-D-erythritol from CTP and 2-C-methyl-D-erythritol 4-phosphate (MEP). This is 2-C-methyl-D-erythritol 4-phosphate cytidylyltransferase from Parasynechococcus marenigrum (strain WH8102).